The following is a 92-amino-acid chain: Putative septation protein SpoVG (92 aa).

Belongs to the SpoVG family.

Its function is as follows. Could be involved in septation. This is Putative septation protein SpoVG from Thermoanaerobacter pseudethanolicus (strain ATCC 33223 / 39E) (Clostridium thermohydrosulfuricum).